The chain runs to 271 residues: Glutamate racemase (271 aa).

Substrate-binding positions include 10 to 11 (DS) and 42 to 43 (YG). Cysteine 73 functions as the Proton donor/acceptor in the catalytic mechanism. 74–75 (NT) serves as a coordination point for substrate. The active-site Proton donor/acceptor is cysteine 183. A substrate-binding site is contributed by 184–185 (TH).

This sequence belongs to the aspartate/glutamate racemases family.

It carries out the reaction L-glutamate = D-glutamate. It participates in cell wall biogenesis; peptidoglycan biosynthesis. Provides the (R)-glutamate required for cell wall biosynthesis. This chain is Glutamate racemase, found in Lactococcus lactis subsp. lactis (strain IL1403) (Streptococcus lactis).